Reading from the N-terminus, the 541-residue chain is Thioredoxin reductase (541 aa).

FAD-binding positions include 51 to 52 (PG), 71 to 74 (DYVK), 87 to 88 (TC), 92 to 96 (GCVPK), Ala161, Asp357, and 364 to 366 (ELA). Cysteines 88 and 93 form a disulfide. The interval 438–452 (HRQKHIRAQKDEYDL) is loop important for the interaction with TRX1. An FAD-binding site is contributed by His509. The Proton acceptor role is filled by His509. A disulfide bridge links Cys535 with Cys540.

Belongs to the class-I pyridine nucleotide-disulfide oxidoreductase family. In terms of assembly, homodimer. The cofactor is FAD.

Its subcellular location is the cytoplasm. It catalyses the reaction [thioredoxin]-dithiol + NADP(+) = [thioredoxin]-disulfide + NADPH + H(+). Its function is as follows. Catalyzes the transfer of electrons from NADPH to thioredoxins TRX1, TRX2 and TRX3, which in turn act as reductants of disulfide containing proteins. Able to reduce nitroglutathione (GSNO), a compound involved in the transport of nitric oxide (NO); however, TRX1 is more efficient in reducing GSNO. Has no catalytic activity towards oxidized glutathione (GSSG). This chain is Thioredoxin reductase, found in Plasmodium falciparum (isolate FCH-5).